A 273-amino-acid chain; its full sequence is Phosphate import ATP-binding protein PstB (273 aa).

Residues 27 to 268 (VTVRDLNFYY…PSDRRTQDYI (242 aa)) enclose the ABC transporter domain. An ATP-binding site is contributed by 59–66 (GPSGCGKS).

Belongs to the ABC transporter superfamily. Phosphate importer (TC 3.A.1.7) family. As to quaternary structure, the complex is composed of two ATP-binding proteins (PstB), two transmembrane proteins (PstC and PstA) and a solute-binding protein (PstS).

The protein resides in the cell inner membrane. The catalysed reaction is phosphate(out) + ATP + H2O = ADP + 2 phosphate(in) + H(+). In terms of biological role, part of the ABC transporter complex PstSACB involved in phosphate import. Responsible for energy coupling to the transport system. This is Phosphate import ATP-binding protein PstB from Rhodopseudomonas palustris (strain ATCC BAA-98 / CGA009).